The following is a 370-amino-acid chain: CST complex subunit STN1 (370 aa).

Positions 1–187 are interaction with CTC1; that stretch reads MESNSSQCED…KVYDQPFHSP (187 aa). The segment at residues 57-157 is a DNA-binding region (OB); the sequence is VDILGTVIGV…EIHATTYYKV (101 aa). Winged helix-turn-helix (wHTH) stretches follow at residues 193 to 297 and 298 to 370; these read EALS…YVTR and EDKE…YTAF.

It belongs to the STN1 family. Component of the CST complex, composed of TEN1/C17orf106, CTC1/C17orf68 and STN1; in the complex interacts directly with TEN1 and CTC1. Interacts with ACD/TPP1, POT1 and POLA1.

It is found in the nucleus. Its subcellular location is the chromosome. The protein localises to the telomere. In terms of biological role, component of the CST complex proposed to act as a specialized replication factor promoting DNA replication under conditions of replication stress or natural replication barriers such as the telomere duplex. The CST complex binds single-stranded DNA with high affinity in a sequence-independent manner, while isolated subunits bind DNA with low affinity by themselves. Initially the CST complex has been proposed to protect telomeres from DNA degradation. However, the CST complex has been shown to be involved in several aspects of telomere replication. The CST complex inhibits telomerase and is involved in telomere length homeostasis; it is proposed to bind to newly telomerase-synthesized 3' overhangs and to terminate telomerase action implicating the association with the ACD:POT1 complex thus interfering with its telomerase stimulation activity. The CST complex is also proposed to be involved in fill-in synthesis of the telomeric C-strand probably implicating recruitment and activation of DNA polymerase alpha. The CST complex facilitates recovery from many forms of exogenous DNA damage; seems to be involved in the re-initiation of DNA replication at repaired forks and/or dormant origins. Required for efficicient replication of the duplex region of the telomere. Promotes efficient replication of lagging-strand telomeres. Promotes general replication start following replication-fork stalling implicating new origin firing. May be in involved in C-strand fill-in during late S/G2 phase independent of its role in telomere duplex replication. The chain is CST complex subunit STN1 from Bos taurus (Bovine).